The chain runs to 372 residues: Histidinol-phosphate aminotransferase (372 aa).

Position 230 is an N6-(pyridoxal phosphate)lysine (Lys230).

This sequence belongs to the class-II pyridoxal-phosphate-dependent aminotransferase family. Histidinol-phosphate aminotransferase subfamily. In terms of assembly, homodimer. Requires pyridoxal 5'-phosphate as cofactor.

The enzyme catalyses L-histidinol phosphate + 2-oxoglutarate = 3-(imidazol-4-yl)-2-oxopropyl phosphate + L-glutamate. The protein operates within amino-acid biosynthesis; L-histidine biosynthesis; L-histidine from 5-phospho-alpha-D-ribose 1-diphosphate: step 7/9. The chain is Histidinol-phosphate aminotransferase from Paenarthrobacter aurescens (strain TC1).